The primary structure comprises 678 residues: Vitrin (678 aa).

The signal sequence occupies residues 1–26; sequence MRTVVLTMKASVIEMFLVLLVTGVHS. The LCCL domain occupies 40 to 133; the sequence is TVPQINCDVK…LSLPRWRESF (94 aa). 2 disulfides stabilise this stretch: C46–C62 and C66–C86. The span at 154-168 shows a compositional bias: polar residues; sequence SSKSPAAQAGETTKA. 2 disordered regions span residues 154–177 and 199–257; these read SSKSPAAQAGETTKAYQRPPIPGT and TLPR…GAAF. Over residues 199–216 the composition is skewed to low complexity; sequence TLPRPSPSAASTTSIPRP. A compositionally biased stretch (polar residues) spans 230–240; that stretch reads STATYTSSQNR. 2 VWFA domains span residues 293-478 and 495-668; these read DLSF…VKRV and DIGF…IQNI. Residues N390 and N520 are each glycosylated (N-linked (GlcNAc...) asparagine).

As to quaternary structure, binds dermatan sulfate and chondroitin sulfate.

Its subcellular location is the secreted. The protein localises to the extracellular space. It is found in the extracellular matrix. Promotes matrix assembly and cell adhesiveness. Plays a role in spinal cord formation by regulating the proliferation and differentiation of neural stem cells. This is Vitrin (VIT) from Homo sapiens (Human).